The chain runs to 98 residues: NADH-ubiquinone oxidoreductase chain 4L (98 aa).

The next 3 membrane-spanning stretches (helical) occupy residues 1-21, 29-49, and 61-81; these read MSLTYMNMFMAFMISLLGLLM, SLLCLEGMMLSLFVMMTVIIL, and IILLVFAACEAALGLSLLVMV.

The protein belongs to the complex I subunit 4L family. In terms of assembly, core subunit of respiratory chain NADH dehydrogenase (Complex I) which is composed of 45 different subunits.

The protein localises to the mitochondrion inner membrane. It catalyses the reaction a ubiquinone + NADH + 5 H(+)(in) = a ubiquinol + NAD(+) + 4 H(+)(out). Its function is as follows. Core subunit of the mitochondrial membrane respiratory chain NADH dehydrogenase (Complex I) which catalyzes electron transfer from NADH through the respiratory chain, using ubiquinone as an electron acceptor. Part of the enzyme membrane arm which is embedded in the lipid bilayer and involved in proton translocation. The sequence is that of NADH-ubiquinone oxidoreductase chain 4L (MT-ND4L) from Uroderma bilobatum (Tent-making bat).